The following is a 424-amino-acid chain: Hemagglutinin-esterase (424 aa).

The first 16 residues, 1–16 (MFLLPRFVLVSCIIGS), serve as a signal peptide directing secretion. Residues 7–127 (FVLVSCIIGS…SNDIWMQNKG (121 aa)) are esterase domain 1. The Virion surface segment spans residues 17–392 (LGFDNPPTNV…PICVYDPLPL (376 aa)). Ser40 functions as the Nucleophile in the catalytic mechanism. Cys44 and Cys65 are oxidised to a cystine. N-linked (GlcNAc...) asparagine; by host glycans are attached at residues Asn54, Asn89, Asn153, Asn236, and Asn301. Intrachain disulfides connect Cys113/Cys162, Cys197/Cys276, and Cys205/Cys249. The segment at 128–266 (LFYTQVYKNM…GNYLAISNEL (139 aa)) is receptor binding. The segment at 267–379 (LLTVPTKAIC…RCPTAADINN (113 aa)) is esterase domain 2. Cys307 and Cys312 are disulfide-bonded. The N-linked (GlcNAc...) asparagine; by host glycan is linked to Asn316. Catalysis depends on charge relay system residues Asp326 and His329. Cys347 and Cys371 are joined by a disulfide. Residue Asn358 is glycosylated (N-linked (GlcNAc...) asparagine; by host). Residues 393–413 (ILLGILLGVAVIIIVVLLLYF) form a helical membrane-spanning segment. Over 414-424 (MVDNGTRLHDA) the chain is Intravirion. N-linked (GlcNAc...) asparagine; by host glycosylation is present at Asn417.

This sequence belongs to the influenza type C/coronaviruses hemagglutinin-esterase family. In terms of assembly, homodimer; disulfide-linked. Forms a complex with the M protein in the pre-Golgi. Associates then with S-M complex to form a ternary complex S-M-HE. In terms of processing, N-glycosylated in the host RER.

The protein localises to the virion membrane. It localises to the host cell membrane. The enzyme catalyses N-acetyl-9-O-acetylneuraminate + H2O = N-acetylneuraminate + acetate + H(+). The catalysed reaction is N-acetyl-4-O-acetylneuraminate + H2O = N-acetylneuraminate + acetate + H(+). In terms of biological role, structural protein that makes short spikes at the surface of the virus. Contains receptor binding and receptor-destroying activities. Mediates de-O-acetylation of N-acetyl-4-O-acetylneuraminic acid, which is probably the receptor determinant recognized by the virus on the surface of erythrocytes and susceptible cells. This receptor-destroying activity is important for virus release as it probably helps preventing self-aggregation and ensures the efficient spread of the progeny virus from cell to cell. May serve as a secondary viral attachment protein for initiating infection, the spike protein being the major one. May become a target for both the humoral and the cellular branches of the immune system. The protein is Hemagglutinin-esterase of Bovine coronavirus (strain LY-138) (BCoV).